The primary structure comprises 290 residues: Protein-glutamine deamidase Cif (290 aa).

Residues 1–26 are disordered; that stretch reads MKISPNTISPSQSDPRMSTNVSQRSR. Residues C117, H173, and Q193 contribute to the active site.

This sequence belongs to the Cif family.

It localises to the secreted. The protein localises to the host nucleus. It carries out the reaction L-glutaminyl-[protein] + H2O = L-glutamyl-[protein] + NH4(+). Functionally, protein-glutamine deamidase effector that inhibits the host cell cycle and other key cellular processes such as the actin network and programmed-cell death. Acts by mediating the side chain deamidation of 'Gln-40' of host NEDD8, converting it to glutamate, thereby abolishing the activity of cullin-RING-based E3 ubiquitin-protein ligase complexes (CRL complexes). Inactivation of CRL complexes prevents ubiquitination and subsequent degradation of the cyclin-dependent kinase inhibitors CDKN1A/p21 and CDKN1B/p27, leading to G1 and G2 cell cycle arrests in host cells. Also able to catalyze deamidation of 'Gln-40' of host ubiquitin in vitro; however, NEDD8 constitutes the preferred substrate in vivo. The sequence is that of Protein-glutamine deamidase Cif from Yersinia pseudotuberculosis serotype O:3 (strain YPIII).